The primary structure comprises 240 residues: UDP-2,3-diacylglucosamine hydrolase (240 aa).

Mn(2+) contacts are provided by Asp-8, His-10, Asp-41, Asn-79, and His-114. Position 79 to 80 (79 to 80 (NR)) interacts with substrate. Positions 122, 160, 164, 167, and 195 each coordinate substrate. The Mn(2+) site is built by His-195 and His-197.

The protein belongs to the LpxH family. It depends on Mn(2+) as a cofactor.

The protein resides in the cell inner membrane. It carries out the reaction UDP-2-N,3-O-bis[(3R)-3-hydroxytetradecanoyl]-alpha-D-glucosamine + H2O = 2-N,3-O-bis[(3R)-3-hydroxytetradecanoyl]-alpha-D-glucosaminyl 1-phosphate + UMP + 2 H(+). It participates in glycolipid biosynthesis; lipid IV(A) biosynthesis; lipid IV(A) from (3R)-3-hydroxytetradecanoyl-[acyl-carrier-protein] and UDP-N-acetyl-alpha-D-glucosamine: step 4/6. In terms of biological role, hydrolyzes the pyrophosphate bond of UDP-2,3-diacylglucosamine to yield 2,3-diacylglucosamine 1-phosphate (lipid X) and UMP by catalyzing the attack of water at the alpha-P atom. Involved in the biosynthesis of lipid A, a phosphorylated glycolipid that anchors the lipopolysaccharide to the outer membrane of the cell. In Escherichia coli O17:K52:H18 (strain UMN026 / ExPEC), this protein is UDP-2,3-diacylglucosamine hydrolase.